The sequence spans 191 residues: UMP-CMP kinase 2 (191 aa).

An ATP-binding site is contributed by 12-17 (GSGKGT). An NMP region spans residues 32–62 (SAGDLLRAERQREGSEFGALIESHIKNGSIV). A ribonucleoside 5'-phosphate-binding positions include Arg-38, 60-62 (SIV), and 88-91 (GFPR). Asn-95 serves as a coordination point for CMP. The tract at residues 128-136 (NRGQGRTDD) is LID. Residue Arg-129 participates in ATP binding. 2 residues coordinate a ribonucleoside 5'-phosphate: Arg-133 and Arg-144. Arg-172 serves as a coordination point for ATP.

Belongs to the adenylate kinase family. UMP-CMP kinase subfamily. Monomer. The cofactor is Mg(2+). In terms of tissue distribution, expressed in neurons and the pharynx.

Its subcellular location is the cytoplasm. It localises to the nucleus. It carries out the reaction CMP + ATP = CDP + ADP. The enzyme catalyses dCMP + ATP = dCDP + ADP. It catalyses the reaction UMP + ATP = UDP + ADP. Catalyzes the phosphorylation of pyrimidine nucleoside monophosphates at the expense of ATP. Plays an important role in de novo pyrimidine nucleotide biosynthesis. Has preference for UMP and CMP as phosphate acceptors. In Caenorhabditis elegans, this protein is UMP-CMP kinase 2.